The sequence spans 359 residues: MLELNFSQQLGDLHLQVATDLPAQGITAIFGLSGAGKTSLINVIGGLTRPQQGRVILNGRVLVDAEKNIYLPPEKRRVGYVFQDARLFPHYRVRGNLQYGMAASMRGQFDAIVGLLGIEPLLNRFPFTLSGGEKQRVAIGRALLTAPELLLMDEPLASLDLPRKRELLPYLERLAQDVNTPILYVSHSMDEILRLADQVVVMDAGKVRAVGGLEEVWASSALRPWLQREEPSSILRVSVIGHHDRYAMTALALGDQRLWVGKLDAAEGNSMRIRINAADVSLALQPPHSSSIRNILPVKVAECLDVGGQVDVKLAIGEQWLWARITPWARDELGLKPGQWVYAQIKSVSFNRQNGPVPD.

The ABC transporter domain occupies 1-229 (MLELNFSQQL…SALRPWLQRE (229 aa)). Position 31-38 (31-38 (GLSGAGKT)) interacts with ATP. The Mop domain maps to 289–354 (SSSIRNILPV…IKSVSFNRQN (66 aa)).

It belongs to the ABC transporter superfamily. Molybdate importer (TC 3.A.1.8) family. As to quaternary structure, the complex is composed of two ATP-binding proteins (ModC), two transmembrane proteins (ModB) and a solute-binding protein (ModA).

It is found in the cell inner membrane. The catalysed reaction is molybdate(out) + ATP + H2O = molybdate(in) + ADP + phosphate + H(+). Its function is as follows. Part of the ABC transporter complex ModABC involved in molybdenum import. Responsible for energy coupling to the transport system. The polypeptide is Molybdenum import ATP-binding protein ModC (Yersinia pseudotuberculosis serotype I (strain IP32953)).